Here is a 367-residue protein sequence, read N- to C-terminus: uncharacterized protein (367 aa).

It belongs to the mimivirus L17x/L18x family.

This is an uncharacterized protein from Acanthamoeba polyphaga mimivirus (APMV).